The following is a 562-amino-acid chain: NAD-dependent histone deacetylase SIR2 (562 aa).

The disordered stretch occupies residues 1–67 (MTIPHMKYAV…RETNTTDPLG (67 aa)). Polar residues predominate over residues 11–25 (SKTSENKVSNTVSPT). Basic and acidic residues predominate over residues 26-36 (QDKDAIRKQPD). The region spanning 237 to 527 (RLSNFFTIDH…AMVAQKCGWT (291 aa)) is the Deacetylase sirtuin-type domain. Residues 262–281 (GAGV…EGFY) and 344–347 (QNID) contribute to the NAD(+) site. His-364 (proton acceptor) is an active-site residue. Zn(2+)-binding residues include Cys-372, Cys-375, Cys-396, and Cys-399. Residues 471 to 473 (GTS), 496 to 498 (NRD), and Cys-513 each bind NAD(+).

Belongs to the sirtuin family. Class I subfamily. In terms of assembly, homomultimer. Forms a complex with SIR3 and SIR4. Component of the RENT complex, at least composed of SIR2, CDC14 and NET1. The RENT complex interacts with FOB1. Interacts with ESC8. Interacts with and ZDS2. Interacts with MCM10. Interacts with SLX5. Interacts with NSI1. Zn(2+) serves as cofactor.

The protein localises to the nucleus. The protein resides in the nucleolus. It catalyses the reaction N(6)-acetyl-L-lysyl-[protein] + NAD(+) + H2O = 2''-O-acetyl-ADP-D-ribose + nicotinamide + L-lysyl-[protein]. Its activity is regulated as follows. Its activity is increased by calorie restriction, which slows the pace of aging and increases maximum lifespan. Activated by resveratrol (3,5,4'-trihydroxy-trans-stilbene), which is found in red wine. Functionally, NAD-dependent deacetylase, which participates in a wide range of cellular events including chromosome silencing, chromosome segregation, DNA recombination and the determination of life span. Involved in transcriptional repression of the silent mating-type loci HML and HMR and telomeric silencing via its association with SIR3 and SIR4. Plays a central role in ribosomal DNA (rDNA) silencing via its association with the RENT complex, preventing hyperrecombination, and repressing transcription from foreign promoters, which contributes to extending life span. Probably represses transcription via the formation of heterochromatin structure, which involves the compaction of chromatin fiber into a more condensed form, although this complex in at least one case can still bind euchromatic levels of positive transcription regulators. Although it displays some NAD-dependent histone deacetylase activity on histone H3K9Ac and H3K14Ac and histone H4K16Ac in vitro, such activity is unclear in vivo and may not be essential. The chain is NAD-dependent histone deacetylase SIR2 (SIR2) from Saccharomyces cerevisiae (strain ATCC 204508 / S288c) (Baker's yeast).